The chain runs to 159 residues: MDNGDRSGAGAGAVGSAGSLGLRVGQAVFSSASLLFMSVGVEFFSYTAFCFLVTIMGLVIPWSCTLAMIDVYSVFVGCPLRVPGVMVIVVVGDCALSIVSFAAACSSAAVIDLLLQLHGSHSSPTFCGRYQLSAMMAFLSWLLMAASATFNLWFVASRW.

The Cytoplasmic portion of the chain corresponds to 1–6 (MDNGDR). A helical transmembrane segment spans residues 7–29 (SGAGAGAVGSAGSLGLRVGQAVF). Over 30 to 48 (SSASLLFMSVGVEFFSYTA) the chain is Extracellular. The chain crosses the membrane as a helical span at residues 49-69 (FCFLVTIMGLVIPWSCTLAMI). Residues 70 to 94 (DVYSVFVGCPLRVPGVMVIVVVGDC) are Cytoplasmic-facing. Residues 95–117 (ALSIVSFAAACSSAAVIDLLLQL) traverse the membrane as a helical segment. The Extracellular portion of the chain corresponds to 118 to 134 (HGSHSSPTFCGRYQLSA). The chain crosses the membrane as a helical span at residues 135-155 (MMAFLSWLLMAASATFNLWFV). Residues 156–159 (ASRW) lie on the Cytoplasmic side of the membrane.

Belongs to the Casparian strip membrane proteins (CASP) family. Homodimer and heterodimers.

The protein localises to the cell membrane. This Zea mays (Maize) protein is CASP-like protein 5C1.